Reading from the N-terminus, the 125-residue chain is Large ribosomal subunit protein bL12 (125 aa).

It belongs to the bacterial ribosomal protein bL12 family. As to quaternary structure, homodimer. Part of the ribosomal stalk of the 50S ribosomal subunit. Forms a multimeric L10(L12)X complex, where L10 forms an elongated spine to which 2 to 4 L12 dimers bind in a sequential fashion. Binds GTP-bound translation factors.

Forms part of the ribosomal stalk which helps the ribosome interact with GTP-bound translation factors. Is thus essential for accurate translation. The chain is Large ribosomal subunit protein bL12 from Mesorhizobium japonicum (strain LMG 29417 / CECT 9101 / MAFF 303099) (Mesorhizobium loti (strain MAFF 303099)).